The following is a 75-amino-acid chain: Ferredoxin-thioredoxin reductase, variable chain (75 aa).

An interaction with ferredoxin region spans residues 43–46 (QGRP).

The protein belongs to the ferredoxin thioredoxin reductase alpha subunit family. As to quaternary structure, heterodimer of subunit A (variable subunit) and subunit B (catalytic subunit). Heterodimeric FTR forms a complex with ferredoxin and thioredoxin.

In terms of biological role, variable subunit of the ferredoxin-thioredoxin reductase (FTR), which catalyzes the two-electron reduction of thioredoxins by the electrons provided by reduced ferredoxin. The sequence is that of Ferredoxin-thioredoxin reductase, variable chain (ftrV) from Synechocystis sp. (strain ATCC 27184 / PCC 6803 / Kazusa).